Consider the following 498-residue polypeptide: Glycerol kinase (498 aa).

Thr12 provides a ligand contact to ADP. ATP contacts are provided by Thr12, Thr13, and Ser14. Sn-glycerol 3-phosphate is bound at residue Thr12. Arg16 is an ADP binding site. The sn-glycerol 3-phosphate site is built by Arg82, Glu83, Tyr134, and Asp243. Residues Arg82, Glu83, Tyr134, Asp243, and Gln244 each coordinate glycerol. ADP-binding residues include Thr265 and Gly308. ATP contacts are provided by Thr265, Gly308, Gln312, and Gly409. Positions 409 and 413 each coordinate ADP.

It belongs to the FGGY kinase family. In terms of assembly, homotetramer and homodimer (in equilibrium).

It catalyses the reaction glycerol + ATP = sn-glycerol 3-phosphate + ADP + H(+). The protein operates within polyol metabolism; glycerol degradation via glycerol kinase pathway; sn-glycerol 3-phosphate from glycerol: step 1/1. Its activity is regulated as follows. Activated by phosphorylation and inhibited by fructose 1,6-bisphosphate (FBP). Key enzyme in the regulation of glycerol uptake and metabolism. Catalyzes the phosphorylation of glycerol to yield sn-glycerol 3-phosphate. The chain is Glycerol kinase from Clostridium botulinum (strain 657 / Type Ba4).